The chain runs to 460 residues: Dihydroorotate dehydrogenase (quinone), mitochondrial (460 aa).

The N-terminal 32 residues, 1–32 (MAGRAATSSAKWAREFLFRRVSSNPLGATRNC), are a transit peptide targeting the mitochondrion. The chain crosses the membrane as a helical span at residues 53-69 (ILTGATIGLAIAGGAYV). Residues 141 to 145 (AGFDK) and S165 each bind FMN. Residue K145 participates in substrate binding. 190–194 (NRCGF) is a substrate binding site. The interval 213-245 (RMLAETSATSSSPSDDVKPGGKSGPGILGVNLG) is disordered. 2 residues coordinate FMN: N243 and N274. 274 to 279 (NVSSPN) serves as a coordination point for substrate. The Nucleophile role is filled by S277. The FMN site is built by K319 and S347. 348 to 349 (NT) contributes to the substrate binding site. FMN is bound by residues G371, G400, and 421 to 422 (YT).

This sequence belongs to the dihydroorotate dehydrogenase family. Type 2 subfamily. FMN is required as a cofactor.

Its subcellular location is the mitochondrion inner membrane. The enzyme catalyses (S)-dihydroorotate + a quinone = orotate + a quinol. It participates in pyrimidine metabolism; UMP biosynthesis via de novo pathway; orotate from (S)-dihydroorotate (quinone route): step 1/1. In terms of biological role, catalyzes the conversion of dihydroorotate to orotate with quinone as electron acceptor. The sequence is that of Dihydroorotate dehydrogenase (quinone), mitochondrial (PYRD) from Arabidopsis thaliana (Mouse-ear cress).